The sequence spans 173 residues: ATP-dependent protease subunit HslV (173 aa).

T2 is an active-site residue. G158, D161, and S164 together coordinate Na(+).

The protein belongs to the peptidase T1B family. HslV subfamily. In terms of assembly, a double ring-shaped homohexamer of HslV is capped on each side by a ring-shaped HslU homohexamer. The assembly of the HslU/HslV complex is dependent on binding of ATP.

The protein localises to the cytoplasm. It carries out the reaction ATP-dependent cleavage of peptide bonds with broad specificity.. With respect to regulation, allosterically activated by HslU binding. In terms of biological role, protease subunit of a proteasome-like degradation complex believed to be a general protein degrading machinery. The sequence is that of ATP-dependent protease subunit HslV from Actinobacillus pleuropneumoniae serotype 5b (strain L20).